A 787-amino-acid polypeptide reads, in one-letter code: Signal transducer and activator of transcription 5B (787 aa).

Tyrosine 90 is modified (phosphotyrosine). A Phosphoserine modification is found at serine 128. The 98-residue stretch at 589-686 folds into the SH2 domain; the sequence is WNDGAILGFV…EVYSKYYTPV (98 aa). A Phosphotyrosine modification is found at tyrosine 682. At tyrosine 699 the chain carries Phosphotyrosine; by HCK, JAK and PTK6.

The protein belongs to the transcription factor STAT family. Upon activation, forms a homodimer or a heterodimer with a related family member. Binds NR3C1. Interacts with NCOA1. Interacts with NMI. Interacts with SOCS7. Interacts (via SH2 domain) with INSR. Interacts with CPEB3; this inhibits STAT5B-mediated transcriptional activation. Tyrosine phosphorylated in response to signaling via activated KIT, resulting in translocation to the nucleus. Tyrosine phosphorylated in response to signaling via activated FLT3; wild-type FLT3 results in much weaker phosphorylation than constitutively activated mutant FLT3. Alternatively, can be phosphorylated by JAK2. Phosphorylation at Tyr-699 by PTK6 or HCK leads to an increase of its transcriptional activity.

The protein resides in the cytoplasm. It localises to the nucleus. In terms of biological role, carries out a dual function: signal transduction and activation of transcription. Mediates cellular responses to the cytokine KITLG/SCF and other growth factors. Binds to the GAS element and activates PRL-induced transcription. Positively regulates hematopoietic/erythroid differentiation. In Bos taurus (Bovine), this protein is Signal transducer and activator of transcription 5B (STAT5B).